Here is a 119-residue protein sequence, read N- to C-terminus: Large ribosomal subunit protein uL18 (119 aa).

It belongs to the universal ribosomal protein uL18 family. Part of the 50S ribosomal subunit; part of the 5S rRNA/L5/L18/L25 subcomplex. Contacts the 5S and 23S rRNAs.

Functionally, this is one of the proteins that bind and probably mediate the attachment of the 5S RNA into the large ribosomal subunit, where it forms part of the central protuberance. The sequence is that of Large ribosomal subunit protein uL18 from Clostridium botulinum (strain 657 / Type Ba4).